Consider the following 372-residue polypeptide: F-box protein AFR (372 aa).

The span at 1–15 (MAEQETTSNINTIND) shows a compositional bias: polar residues. The disordered stretch occupies residues 1-27 (MAEQETTSNINTINDQAEEETRTKSQP). Residues 29–74 (ISGLPNDIAELCLLRLPYPYHALYRSVSSSWNKTITNPRFLFSKQS) form the F-box domain. Kelch repeat units follow at residues 80 to 126 (PYLF…HALS), 135 to 178 (KLFV…NVNG), 179 to 227 (KIMA…VIGK), 229 to 276 (MCVT…IRDR), and 279 to 325 (VISE…DRVF).

Part of a SCF (ASK-cullin-F-box) protein ligase complex. Interacts with SKP1A.

It functions in the pathway protein modification; protein ubiquitination. Functionally, component of SCF (ASK-cullin-F-box) E3 ubiquitin ligase complexes, which may mediate the ubiquitination and subsequent proteasomal degradation of target proteins. Part of the phyA-mediated signaling transduction pathway leading to the regulation of gene expression and hypocotyls elongation in response to red and far-red light exposure. The sequence is that of F-box protein AFR (AFR) from Arabidopsis thaliana (Mouse-ear cress).